A 353-amino-acid polypeptide reads, in one-letter code: Ferredoxin--NADP reductase (353 aa).

Positions 33, 41, 46, 86, 121, 293, and 333 each coordinate FAD.

This sequence belongs to the ferredoxin--NADP reductase type 2 family. Homodimer. The cofactor is FAD.

It carries out the reaction 2 reduced [2Fe-2S]-[ferredoxin] + NADP(+) + H(+) = 2 oxidized [2Fe-2S]-[ferredoxin] + NADPH. The sequence is that of Ferredoxin--NADP reductase from Verminephrobacter eiseniae (strain EF01-2).